A 535-amino-acid polypeptide reads, in one-letter code: MEVSSVKKLEQLEYSLESVTDLSSSSVSSSSPAVATFSYVDGVTELRFLQSDSTHCFNFDLASAQLFKLGPVHFICVSDGSSSSEEKSFSKGVNIKFKNEKDSKDFCESFEEWRNDSVVQGSSLQNGTVSANKSKFDNKIEASSAKMYFHYYGQLLHQQNMLQDYVRTGTYYAAVMENHSDFAGRVVVDVGAGSGILSMFAAQAGAKHVYAVEASEMAEYARKLIAGNPLFADRITVIKGKVEDIELPEKADILISEPMGTLLVNERMLESYVIARDRFMTPKGKMFPTVGRIHMAPFSDEFLFIEMANKAMFWQQQNYYGVDLTPLYGSAHQGYFSQPVVDAFDPRLLVASPMFHMIDFTQMKEEDFYEIDIPLKFTASMCTRMHGLACWFDVLFDGSTVQRWLTTAPGAPTTHWYQIRCVLSQPIYVMAGQEITGRLHLIAHSAQSYTIDLTLSAKMWGPGASQGGILQSSTCKFDLKEPYYRMSQPQAYPVAQEPPLQPQPELSTQQDIQTPNDELEEELLQQLPQNPSAQL.

An N-acetylmethionine modification is found at Met-1. The SAM-dependent MTase PRMT-type domain maps to 141 to 456 (EASSAKMYFH…QSYTIDLTLS (316 aa)). 5 residues coordinate S-adenosyl-L-methionine: Gln-158, Arg-167, Gly-191, Glu-213, and Glu-243. Active-site residues include Glu-257 and Glu-266. Position 271 (Ser-271) interacts with S-adenosyl-L-methionine. Positions 494-517 (VAQEPPLQPQPELSTQQDIQTPND) are disordered. A compositionally biased stretch (polar residues) spans 507–516 (STQQDIQTPN).

Belongs to the class I-like SAM-binding methyltransferase superfamily. Protein arginine N-methyltransferase family. In terms of assembly, interacts with PQT3 in the nucleus. In terms of processing, ubiquitinated by PQT3.

It is found in the nucleus. The protein localises to the cytoplasm. It catalyses the reaction L-arginyl-[protein] + 2 S-adenosyl-L-methionine = N(omega),N(omega)-dimethyl-L-arginyl-[protein] + 2 S-adenosyl-L-homocysteine + 2 H(+). Methylates (mono- and asymmetric dimethylation) the guanidino nitrogens of arginyl residues in several proteins involved in DNA packaging, transcription regulation, and mRNA stability. Recruited to promoters upon gene activation, methylates histone H3 and activates transcription via chromatin remodeling. Positive regulator in the oxidative stress tolerance that promotes the expression of enzymes preventing oxidative stress such as APX1 and GPX1 by histone methylation (H3R17me2a). Confers tolerance to cadmium CdCl(2) and salt NaCl stresses. The polypeptide is Probable histone-arginine methyltransferase 1.3 (PRMT13) (Arabidopsis thaliana (Mouse-ear cress)).